Here is a 197-residue protein sequence, read N- to C-terminus: Thymidylate kinase (197 aa).

ATP is bound at residue 7 to 14 (GIDGSGKS).

This sequence belongs to the thymidylate kinase family.

It catalyses the reaction dTMP + ATP = dTDP + ADP. In terms of biological role, phosphorylation of dTMP to form dTDP in both de novo and salvage pathways of dTTP synthesis. The polypeptide is Thymidylate kinase (Thermotoga sp. (strain RQ2)).